We begin with the raw amino-acid sequence, 394 residues long: Queuine tRNA-ribosyltransferase (394 aa).

D95 functions as the Proton acceptor in the catalytic mechanism. Substrate contacts are provided by residues 95 to 99 (DSGGF), D149, Q190, and G217. The segment at 248–254 (GVGTPID) is RNA binding. The active-site Nucleophile is D267. An RNA binding; important for wobble base 34 recognition region spans residues 272-276 (TRNAR). The Zn(2+) site is built by C305, C307, C310, and H337. Positions 375–394 (NDANETVGATESTESTESTE) are disordered.

The protein belongs to the queuine tRNA-ribosyltransferase family. Homodimer. Within each dimer, one monomer is responsible for RNA recognition and catalysis, while the other monomer binds to the replacement base PreQ1. Requires Zn(2+) as cofactor.

It catalyses the reaction 7-aminomethyl-7-carbaguanine + guanosine(34) in tRNA = 7-aminomethyl-7-carbaguanosine(34) in tRNA + guanine. The protein operates within tRNA modification; tRNA-queuosine biosynthesis. Its function is as follows. Catalyzes the base-exchange of a guanine (G) residue with the queuine precursor 7-aminomethyl-7-deazaguanine (PreQ1) at position 34 (anticodon wobble position) in tRNAs with GU(N) anticodons (tRNA-Asp, -Asn, -His and -Tyr). Catalysis occurs through a double-displacement mechanism. The nucleophile active site attacks the C1' of nucleotide 34 to detach the guanine base from the RNA, forming a covalent enzyme-RNA intermediate. The proton acceptor active site deprotonates the incoming PreQ1, allowing a nucleophilic attack on the C1' of the ribose to form the product. After dissociation, two additional enzymatic reactions on the tRNA convert PreQ1 to queuine (Q), resulting in the hypermodified nucleoside queuosine (7-(((4,5-cis-dihydroxy-2-cyclopenten-1-yl)amino)methyl)-7-deazaguanosine). The sequence is that of Queuine tRNA-ribosyltransferase from Sorangium cellulosum (strain So ce56) (Polyangium cellulosum (strain So ce56)).